A 500-amino-acid polypeptide reads, in one-letter code: Lysine--tRNA ligase (500 aa).

Residues E410 and E417 each contribute to the Mg(2+) site.

It belongs to the class-II aminoacyl-tRNA synthetase family. Homodimer. It depends on Mg(2+) as a cofactor.

The protein resides in the cytoplasm. The catalysed reaction is tRNA(Lys) + L-lysine + ATP = L-lysyl-tRNA(Lys) + AMP + diphosphate. This chain is Lysine--tRNA ligase, found in Pseudomonas entomophila (strain L48).